Consider the following 608-residue polypeptide: Bifunctional lycopene cyclase/phytoene synthase (608 aa).

The segment at 1 to 240 (MSILTYLEFH…LVFATCAIDR (240 aa)) is lycopene beta-cyclase. A run of 7 helical transmembrane segments spans residues 3–23 (ILTYLEFHLYYTLPVLAALCW), 37–56 (YKFLMLMAASTASIWDNYIV), 80–97 (YMFFIIMTLMTVAFSNFV), 117–137 (LLVRLVPVSALLAITYHAWHL), 150–170 (ILWYACPVLAILWLGAGEYIL), 175–195 (AVLLSIVIPSVYLCWADIVAI), and 218–238 (VEECLFFTLINTVLVFATCAI). A phytoene synthase region spans residues 247–608 (LYKSSVQNQN…ARKIKSFFVD (362 aa)).

It in the N-terminal section; belongs to the lycopene beta-cyclase family. This sequence in the C-terminal section; belongs to the phytoene/squalene synthase family.

It is found in the membrane. The enzyme catalyses all-trans-lycopene = gamma-carotene. It carries out the reaction gamma-carotene = all-trans-beta-carotene. The catalysed reaction is 2 (2E,6E,10E)-geranylgeranyl diphosphate = 15-cis-phytoene + 2 diphosphate. The protein operates within carotenoid biosynthesis; beta-carotene biosynthesis. It functions in the pathway carotenoid biosynthesis; phytoene biosynthesis; all-trans-phytoene from geranylgeranyl diphosphate: step 1/1. Bifunctional enzyme that catalyzes the reactions from geranylgeranyl diphosphate to phytoene (phytoene synthase) and lycopene to beta-carotene via the intermediate gamma-carotene (lycopene cyclase). The sequence is that of Bifunctional lycopene cyclase/phytoene synthase from Blakeslea trispora (Choanephora trispora).